The primary structure comprises 415 residues: Leucine-rich repeat-containing protein 34 (415 aa).

LRR repeat units follow at residues 246–272 and 274–296; these read SLRY…LKSN and TLEV…LSET.

Interacts with NPM1 and NCL. In terms of tissue distribution, expressed in testis where it specifically localizes to germ cells (at protein level). Not detected in other tissues tested (at protein level). Expressed in pluripotent embryonic stem cells and multipotent adult germline stem cells.

The protein resides in the nucleus. The protein localises to the nucleolus. Its subcellular location is the cytoplasm. Its function is as follows. Highly expressed in stem cells where it may be involved in regulation of pluripotency. In embryonic stem cells (ESCs), important for normal expression of the pluripotency regulators POU5F1/OCT4 and KLF4. Also important for expression of the ectodermal marker gene NES and the endodermal marker gene GATA4. Promotes stem cell proliferation in vitro. The chain is Leucine-rich repeat-containing protein 34 from Mus musculus (Mouse).